The sequence spans 242 residues: Type III pantothenate kinase (242 aa).

7–14 (DLGNSRFK) lines the ATP pocket. Residues tyrosine 91 and 98–101 (GVDR) each bind substrate. Aspartate 100 (proton acceptor) is an active-site residue. Threonine 121 is an ATP binding site. Threonine 171 is a substrate binding site.

Belongs to the type III pantothenate kinase family. Homodimer. NH4(+) is required as a cofactor. K(+) serves as cofactor.

It is found in the cytoplasm. The catalysed reaction is (R)-pantothenate + ATP = (R)-4'-phosphopantothenate + ADP + H(+). It participates in cofactor biosynthesis; coenzyme A biosynthesis; CoA from (R)-pantothenate: step 1/5. Catalyzes the phosphorylation of pantothenate (Pan), the first step in CoA biosynthesis. The chain is Type III pantothenate kinase from Xylella fastidiosa (strain 9a5c).